Here is a 449-residue protein sequence, read N- to C-terminus: Chromogranin-A (449 aa).

The first 18 residues, 1 to 18 (MRSAAVLALLLCAGQVIA), serve as a signal peptide directing secretion. Cysteine 35 and cysteine 56 form a disulfide bridge. Positions 87–431 (AKERTHQQKK…EDQELESLSA (345 aa)) are disordered. Serine 99 bears the Phosphoserine mark. Residues 107 to 140 (VLEKPNDQAEPKEVTEEVSSKDAAEKRDDFKEVE) show a composition bias toward basic and acidic residues. Serine 142 bears the Phosphoserine mark. A glycan (O-linked (GalNAc...) serine) is linked at serine 185. Tyrosine 191 carries the phosphotyrosine modification. Serine 200 bears the Phosphoserine mark. The O-linked (GalNAc...) serine glycan is linked to serine 204. Residue serine 215 is modified to Phosphoserine. Residues 233–242 (EAEAREKAVP) show a composition bias toward basic and acidic residues. Threonine 249 is a glycosylation site (O-linked (GalNAc...) threonine). Residues 279-297 (GAEEAKPPEGKGEWAHSRQ) are compositionally biased toward basic and acidic residues. The residue at position 295 (serine 295) is a Phosphoserine. At glycine 312 the chain carries Glycine amide. Serine 315, serine 325, and serine 363 each carry phosphoserine. Residues 323 to 351 (QLSKEWEDAKRWSKMDQLAKELTAEKRLE) show a composition bias toward basic and acidic residues. At methionine 364 the chain carries Methionine sulfoxide. Serine 390, serine 394, serine 416, and serine 430 each carry phosphoserine. Basic and acidic residues predominate over residues 406–423 (YPEEKKEEEGSANRRPED). O-linked (Xyl...) (chondroitin sulfate) serine glycosylation is present at serine 416.

It belongs to the chromogranin/secretogranin protein family. In terms of assembly, self-interacts; self-assembly is promoted in vitro by chondroitin sulfate attachment which occurs at mildly acidic pH conditions. Interacts with SCG3. Interacts with ITPR1 in the secretory granules. Post-translationally, in secretory granules, is attacked at both N- and C-terminal sides by proteolytic enzymes generating numerous peptides of various activities. Proteolytic processing can give rise to additional longer forms of catestatin peptides which display a less potent catecholamine release-inhibitory activity. O-glycosylated; contains chondroitin sulfate (CS). CS attachment is pH-dependent, being observed at mildly acidic conditions of pH 5 but not at neutral pH, and promotes self-assembly in vitro. In terms of tissue distribution, highest concentration of GE-25 found in adrenal medulla with lower levels present in the pituitary, the intestinal mucosa and the pancreas. Also found in the brain.

The protein resides in the secreted. It is found in the cytoplasmic vesicle. The protein localises to the secretory vesicle. It localises to the neuronal dense core vesicle. Strongly inhibits glucose induced insulin release from the pancreas. Its function is as follows. Completely inhibits catecholamine release from chromaffin cells. Functionally, has antibacterial activity against M.luteus. Not active against E.coli. In terms of biological role, inhibits catecholamine release from chromaffin cells and noradrenergic neurons by acting as a non-competitive nicotinic cholinergic antagonist. Displays antibacterial activity against Gram-positive bacteria M.luteus and B.megaterium, and Gram-negative bacteria E.coli, and antifungal activity against a variety of filamentous fungi including A.fumigatus, N.hematococca, F.culmorum, F.oxyporum, T.mentagrophytes and several forms of Candida: C.albicans, C.tropicalis, C.glabrata and C.neoform. Can induce mast cell migration, degranulation and production of cytokines and chemokines. Has antibacterial activity against Gram-positive bacteria M.luteus, B.megaterium. Not active against Gram-positive bacteria B.cereus, B.subtilis, S.pyogenes, M.fortuitum, S.aureus and L.monocytogenes and against Gram-negative bacteria E.coli, E.cloacae, S.typhimurium, K.pneumoniae and P.aeruginosa. Possesses antifungal activity against N.crassa, A.fumigatus, A.brassicicola, N.hematococca, F.culmorum and F.oxyporum and against the yeast S.cerevisiae and C.albicans. Inactive against A.benhamiae. Its function is as follows. Has antifungal activity against N.crassa, A.fumigatus, A.brassicicola, N.hematococca, F.culmorum, F.oxyporum, A.benhamiae, C.neoformans, as well as against yeasts C.albicans, and C.tropicalis. Seems to be inactive against C.glabrata. Interacts with the fungal cell wall, crosses the plasma membrane and accumulates in fungal cells where it inhibits calcineurin activity. Functionally, regulates granule biogenesis in endocrine cells by up-regulating the transcription of protease nexin 1 (SERPINE2) via a cAMP-PKA-SP1 pathway. This leads to inhibition of granule protein degradation in the Golgi complex which in turn promotes granule formation. This chain is Chromogranin-A (CHGA), found in Bos taurus (Bovine).